We begin with the raw amino-acid sequence, 129 residues long: Phosphoribosyl-AMP cyclohydrolase (129 aa).

Asp85 contributes to the Mg(2+) binding site. Cys86 contacts Zn(2+). Residues Asp87 and Asp89 each coordinate Mg(2+). 2 residues coordinate Zn(2+): Cys102 and Cys109.

The protein belongs to the PRA-CH family. As to quaternary structure, homodimer. Requires Mg(2+) as cofactor. It depends on Zn(2+) as a cofactor.

It is found in the cytoplasm. It catalyses the reaction 1-(5-phospho-beta-D-ribosyl)-5'-AMP + H2O = 1-(5-phospho-beta-D-ribosyl)-5-[(5-phospho-beta-D-ribosylamino)methylideneamino]imidazole-4-carboxamide. The protein operates within amino-acid biosynthesis; L-histidine biosynthesis; L-histidine from 5-phospho-alpha-D-ribose 1-diphosphate: step 3/9. In terms of biological role, catalyzes the hydrolysis of the adenine ring of phosphoribosyl-AMP. This Methanococcus maripaludis (strain C6 / ATCC BAA-1332) protein is Phosphoribosyl-AMP cyclohydrolase.